Consider the following 280-residue polypeptide: Lysosome-associated membrane glycoprotein 5 (280 aa).

The N-terminal stretch at 1 to 29 (MDLQGRGVPSIDRLRVLLMLFHTMAQIMA) is a signal peptide. Residues 30–235 (EQEVENLSGL…PVDEREQLEE (206 aa)) are Extracellular-facing. N-linked (GlcNAc...) asparagine glycans are attached at residues N35, N53, and N127. A helical membrane pass occupies residues 236-256 (TLPLILGLILGLVIMVTLAIY). Residues 257–280 (HVHHKMTANQVQIPRDRSQYKHMG) are Cytoplasmic-facing.

Belongs to the LAMP family. Post-translationally, glycosylated. As to expression, expressed in plasmocytoid dendritic cells. Expressed in suprabasal skin keratinocytes and squamous cells (at protein level). Expressed in the brain and weakly in spleen and skin. Expressed in plasmocytoid dendritic cells.

The protein resides in the cell membrane. It is found in the cytoplasmic vesicle. Its subcellular location is the secretory vesicle. It localises to the synaptic vesicle membrane. The protein localises to the endoplasmic reticulum-Golgi intermediate compartment membrane. The protein resides in the endosome membrane. It is found in the cytoplasmic vesicle membrane. Its subcellular location is the cell projection. It localises to the dendrite. The protein localises to the growth cone membrane. The protein resides in the early endosome membrane. It is found in the recycling endosome. In terms of biological role, plays a role in short-term synaptic plasticity in a subset of GABAergic neurons in the brain. This chain is Lysosome-associated membrane glycoprotein 5 (LAMP5), found in Homo sapiens (Human).